Reading from the N-terminus, the 280-residue chain is Protein scylla (280 aa).

The disordered stretch occupies residues leucine 39 to serine 96. 2 stretches are compositionally biased toward low complexity: residues threonine 46–serine 69 and glycine 77–serine 96.

It belongs to the DDIT4 family.

The protein resides in the cytoplasm. Functionally, inhibits cell growth by regulating the Tor pathway upstream of the Tsc1-Tsc2 complex and downstream of Akt1. Acts as a cell death activator during head development. The chain is Protein scylla (scyl) from Drosophila melanogaster (Fruit fly).